The sequence spans 128 residues: Iron-sulfur cluster insertion protein ErpA 1 (128 aa).

3 residues coordinate iron-sulfur cluster: cysteine 47, cysteine 111, and cysteine 113.

This sequence belongs to the HesB/IscA family. Homodimer. Iron-sulfur cluster serves as cofactor.

Required for insertion of 4Fe-4S clusters for at least IspG. This Methylococcus capsulatus (strain ATCC 33009 / NCIMB 11132 / Bath) protein is Iron-sulfur cluster insertion protein ErpA 1.